The chain runs to 153 residues: Large ribosomal subunit protein uL30 (153 aa).

This sequence belongs to the universal ribosomal protein uL30 family. As to quaternary structure, part of the 50S ribosomal subunit.

In Methanoculleus marisnigri (strain ATCC 35101 / DSM 1498 / JR1), this protein is Large ribosomal subunit protein uL30.